The primary structure comprises 234 residues: Large ribosomal subunit protein uL1 (234 aa).

It belongs to the universal ribosomal protein uL1 family. In terms of assembly, part of the 50S ribosomal subunit.

Its function is as follows. Binds directly to 23S rRNA. The L1 stalk is quite mobile in the ribosome, and is involved in E site tRNA release. Functionally, protein L1 is also a translational repressor protein, it controls the translation of the L11 operon by binding to its mRNA. This Helicobacter pylori (strain G27) protein is Large ribosomal subunit protein uL1.